The sequence spans 247 residues: Eukaryotic translation initiation factor 6 (247 aa).

Ser-174 and Ser-175 each carry phosphoserine; by CK1.

Belongs to the eIF-6 family. In terms of assembly, monomer. Associates with the 60S ribosomal subunit. Phosphorylation at Ser-174 and Ser-175 promotes nuclear export.

The protein resides in the cytoplasm. It is found in the nucleus. The protein localises to the nucleolus. Functionally, binds to the 60S ribosomal subunit and prevents its association with the 40S ribosomal subunit to form the 80S initiation complex in the cytoplasm. Is also involved in ribosome biogenesis. Associates with pre-60S subunits in the nucleus and is involved in its nuclear export. The chain is Eukaryotic translation initiation factor 6 (tif6) from Aspergillus oryzae (strain ATCC 42149 / RIB 40) (Yellow koji mold).